We begin with the raw amino-acid sequence, 399 residues long: MGKSMKVDDIITFAFKNIKQKRTQSLLTIIGIVIGVLAMVSLISLGYGVQNYIHEEMMKMGSNKITILPMKQFGVPPSHLFTKKEIKAIKNVKGVDTVMYGWYGGCEIEYNGEKKFVSYYYAIPSKLREVYKDSGYDIEEGRWLEDNDKYACVIGYGTAHNLFDREIKVGDVIKIKDKKFRVVGILKQIGNQQDDNSIILNIDVGEKLFGNEGKYNFISVTVKEGEDIEKVSEEIKKALKKSFGDEDFSVLTAEQLAKTVSSVLGVITIFVVGVAAISLLVGAVGISNTMHMSILERRKDIGILKALGAETTDILAIFVVESGFLGLFGGIVGLVLGILLAEVIEALAHKMGYLMVNAWISWELIVGVLIFSFLVGVISGYFPARSGAKLNPIETLRGE.

The next 5 helical transmembrane spans lie at 26-46, 266-286, 301-321, 324-344, and 358-378; these read LLTIIGIVIGVLAMVSLISLG, VITIFVVGVAAISLLVGAVGI, IGILKALGAETTDILAIFVVE, FLGLFGGIVGLVLGILLAEVI, and AWISWELIVGVLIFSFLVGVI.

The protein belongs to the ABC-4 integral membrane protein family.

Its subcellular location is the cell membrane. This is an uncharacterized protein from Methanocaldococcus jannaschii (strain ATCC 43067 / DSM 2661 / JAL-1 / JCM 10045 / NBRC 100440) (Methanococcus jannaschii).